The primary structure comprises 503 residues: Aromatase (503 aa).

Transmembrane regions (helical) follow at residues 19 to 39 and 303 to 323; these read EAMPAATMPVLLLTGLFLLVW and MLIAAPDTMSVSLFFMLFLIA. Positions 309 and 374 each coordinate substrate. Cys-437 lines the heme pocket.

This sequence belongs to the cytochrome P450 family. The cofactor is heme. Post-translationally, phosphorylated in vitro by PKA and PKG/PRKG1. These phosphorylations inhibit the catalytic activity as measured by estrone synthesis from androstenedione (36% decrease for PKA and 30% for PKG/PRKG1). Widely expressed, including in adult and fetal brain, placenta, skin fibroblasts, adipose tissue and gonads.

It localises to the endoplasmic reticulum membrane. Its subcellular location is the microsome membrane. The enzyme catalyses testosterone + 3 reduced [NADPH--hemoprotein reductase] + 3 O2 = 17beta-estradiol + formate + 3 oxidized [NADPH--hemoprotein reductase] + 4 H2O + 4 H(+). The catalysed reaction is androst-4-ene-3,17-dione + 3 reduced [NADPH--hemoprotein reductase] + 3 O2 = estrone + formate + 3 oxidized [NADPH--hemoprotein reductase] + 4 H2O + 4 H(+). It catalyses the reaction androst-4-ene-3,17-dione + reduced [NADPH--hemoprotein reductase] + O2 = 19-hydroxyandrost-4-ene-3,17-dione + oxidized [NADPH--hemoprotein reductase] + H2O + H(+). It carries out the reaction 19-hydroxyandrost-4-ene-3,17-dione + reduced [NADPH--hemoprotein reductase] + O2 = 19-oxo-androst-4-ene-3,17-dione + oxidized [NADPH--hemoprotein reductase] + 2 H2O + H(+). The enzyme catalyses 19-oxo-androst-4-ene-3,17-dione + reduced [NADPH--hemoprotein reductase] + O2 = estrone + formate + oxidized [NADPH--hemoprotein reductase] + H2O + 2 H(+). The catalysed reaction is estrone + reduced [NADPH--hemoprotein reductase] + O2 = 2-hydroxyestrone + oxidized [NADPH--hemoprotein reductase] + H2O + H(+). It catalyses the reaction 17beta-hydroxy-5alpha-androstan-3-one + reduced [NADPH--hemoprotein reductase] + O2 = 17beta,19-dihydroxy-3-oxo-5alpha-androstanone + oxidized [NADPH--hemoprotein reductase] + H2O + H(+). It carries out the reaction 17beta,19-dihydroxy-3-oxo-5alpha-androstanone + reduced [NADPH--hemoprotein reductase] + O2 = 17beta-hydroxy-3,19-dioxo-5alpha-androstanone + oxidized [NADPH--hemoprotein reductase] + 2 H2O + H(+). The enzyme catalyses 17beta-hydroxy-3,19-dioxo-5alpha-androstanone + reduced [NADPH--hemoprotein reductase] + O2 = 17beta-hydroxy-3-oxo-19-nor-5alpha-androst-1-ene + formate + oxidized [NADPH--hemoprotein reductase] + H2O + 2 H(+). It functions in the pathway steroid hormone biosynthesis. A cytochrome P450 monooxygenase that catalyzes the conversion of C19 androgens, androst-4-ene-3,17-dione (androstenedione) and testosterone to the C18 estrogens, estrone and estradiol, respectively. Catalyzes three successive oxidations of C19 androgens: two conventional oxidations at C19 yielding 19-hydroxy and 19-oxo/19-aldehyde derivatives, followed by a third oxidative aromatization step that involves C1-beta hydrogen abstraction combined with cleavage of the C10-C19 bond to yield a phenolic A ring and formic acid. Alternatively, the third oxidative reaction yields a 19-norsteroid and formic acid. Converts dihydrotestosterone to delta1,10-dehydro 19-nordihydrotestosterone and may play a role in homeostasis of this potent androgen. Also displays 2-hydroxylase activity toward estrone. Mechanistically, uses molecular oxygen inserting one oxygen atom into a substrate, and reducing the second into a water molecule, with two electrons provided by NADPH via cytochrome P450 reductase (CPR; NADPH-ferrihemoprotein reductase). In Homo sapiens (Human), this protein is Aromatase.